Consider the following 530-residue polypeptide: Carbohydrate sulfotransferase 2 (530 aa).

Topologically, residues methionine 1 to lysine 54 are cytoplasmic. A helical; Signal-anchor for type II membrane protein transmembrane segment spans residues alanine 55–aspartate 75. The Lumenal segment spans residues tyrosine 76–leucine 530. The disordered stretch occupies residues aspartate 89–arginine 119. Residue tryptophan 173–phenylalanine 179 participates in 3'-phosphoadenylyl sulfate binding. Asparagine 243 is a glycosylation site (N-linked (GlcNAc...) asparagine). Position 332 to 340 (arginine 332 to serine 340) interacts with 3'-phosphoadenylyl sulfate. N-linked (GlcNAc...) asparagine glycans are attached at residues asparagine 457 and asparagine 475.

It belongs to the sulfotransferase 1 family. Gal/GlcNAc/GalNAc subfamily. Homodimer; disulfide-linked. Homodimerization is not essential for enzyme activity. In terms of processing, glycosylation at Asn-475 is required for catalytic activity. In terms of tissue distribution, widely expressed. Highly expressed in bone marrow, peripheral blood leukocytes, spleen, brain, spinal cord, ovary and placenta. Expressed by high endothelial cells (HEVs) and leukocytes.

It is found in the golgi apparatus. The protein resides in the trans-Golgi network membrane. It catalyses the reaction 3-O-{N-acetyl-beta-D-glucosaminyl-(1-&gt;3)-beta-D-galactosyl-(1-&gt;3)-N-acetyl-alpha-D-galactosaminyl}-L-threonyl-[protein] + 3'-phosphoadenylyl sulfate = 3-O-{6-O-sulfo-N-acetyl-beta-D-glucosaminyl-(1-&gt;3)-beta-D-galactosyl-(1-&gt;3)-N-acetyl-alpha-D-galactosaminyl}-L-threonyl-[protein] + adenosine 3',5'-bisphosphate + H(+). It carries out the reaction 3-O-{N-acetyl-beta-D-glucosaminyl-(1-&gt;3)-beta-D-galactosyl-(1-&gt;3)-N-acetyl-alpha-D-galactosaminyl}-L-seryl-[protein] + 3'-phosphoadenylyl sulfate = 3-O-{6-O-sulfo-N-acetyl-beta-D-glucosaminyl-(1-&gt;3)-beta-D-galactosyl-(1-&gt;3)-N-acetyl-alpha-D-galactosaminyl}-L-seryl-[protein] + adenosine 3',5'-bisphosphate + H(+). The catalysed reaction is a 3-O-{beta-D-galactosyl-(1-&gt;3)-[N-acetyl-beta-D-glucosaminyl-(1-&gt;6)]-N-acetyl-alpha-D-galactosaminyl}-L-threonyl-[protein] + 3'-phosphoadenylyl sulfate = 3-O-{beta-D-galactosyl-(1-&gt;3)-[6-O-sulfo-N-acetyl-beta-D-glucosaminyl-(1-&gt;6)]-N-acetyl-alpha-D-galactosaminyl}-L-threonyl-[protein] + adenosine 3',5'-bisphosphate + H(+). The enzyme catalyses 3-O-{beta-D-galactosyl-(1-&gt;3)-[N-acetyl-beta-D-glucosaminyl-(1-&gt;6)]-N-acetyl-alpha-D-galactosaminyl}-L-seryl-[protein] + 3'-phosphoadenylyl sulfate = 3-O-{beta-D-galactosyl-(1-&gt;3)-[6-O-sulfo-N-acetyl-beta-D-glucosaminyl-(1-&gt;6)]-N-acetyl-alpha-D-galactosaminyl}-L-seryl-[protein] + adenosine 3',5'-bisphosphate + H(+). It functions in the pathway protein modification; carbohydrate sulfation. Functionally, sulfotransferase that utilizes 3'-phospho-5'-adenylyl sulfate (PAPS) as sulfonate donor to catalyze the transfer of sulfate to position 6 of non-reducing N-acetylglucosamine (GlcNAc) residues within keratan-like structures on N-linked glycans and within mucin-associated glycans that can ultimately serve as SELL ligands. SELL ligands are present in high endothelial cells (HEVs) and play a central role in lymphocyte homing at sites of inflammation. Participates in biosynthesis of the SELL ligand sialyl 6-sulfo Lewis X and in lymphocyte homing to Peyer patches. Has no activity toward O-linked sugars. Its substrate specificity may be influenced by its subcellular location. Sulfates GlcNAc residues at terminal, non-reducing ends of oligosaccharide chains. This chain is Carbohydrate sulfotransferase 2 (CHST2), found in Homo sapiens (Human).